The chain runs to 409 residues: Thiaminase-1 (409 aa).

The first 29 residues, 1-29 (MSKVKGFIYKPLMVMLALLLVVVSPAGAG), serve as a signal peptide directing secretion. Catalysis depends on Cys-143, which acts as the Nucleophile. Glu-271 serves as the catalytic Proton acceptor.

As to quaternary structure, monomer.

Its subcellular location is the secreted. The enzyme catalyses pyridine + thiamine = heteropyrithiamine + 5-(2-hydroxyethyl)-4-methylthiazole. In terms of biological role, degrades thiamine by replacing its thiazole moiety with a wide range of nucleophiles. This Paenibacillus thiaminolyticus (Bacillus thiaminolyticus) protein is Thiaminase-1.